A 682-amino-acid chain; its full sequence is uncharacterized protein (682 aa).

The 204-residue stretch at Val284–Val487 folds into the MCM domain. Residue Thr329–Thr336 participates in ATP binding.

It belongs to the MCM family.

This is an uncharacterized protein from Methanocaldococcus jannaschii (strain ATCC 43067 / DSM 2661 / JAL-1 / JCM 10045 / NBRC 100440) (Methanococcus jannaschii).